The primary structure comprises 47 residues: uncharacterized protein (47 aa).

This is an uncharacterized protein from Escherichia coli.